A 138-amino-acid chain; its full sequence is Hydrogenase maturation factor HypA (138 aa).

His-2 contributes to the Ni(2+) binding site. Residues Cys-73, Cys-76, Cys-110, and Cys-113 each coordinate Zn(2+).

Belongs to the HypA/HybF family.

Involved in the maturation of [NiFe] hydrogenases. Required for nickel insertion into the metal center of the hydrogenase. The sequence is that of Hydrogenase maturation factor HypA from Thermococcus sibiricus (strain DSM 12597 / MM 739).